Here is a 339-residue protein sequence, read N- to C-terminus: GTPase Obg (339 aa).

Residues Met-1–Ile-159 enclose the Obg domain. The 168-residue stretch at Ala-160 to Glu-327 folds into the OBG-type G domain. Residues Gly-166 to Ser-173, Phe-191 to Tyr-195, Asp-212 to Gly-215, Ser-279 to Asp-282, and Ser-308 to Val-310 contribute to the GTP site. Mg(2+) is bound by residues Ser-173 and Thr-193.

It belongs to the TRAFAC class OBG-HflX-like GTPase superfamily. OBG GTPase family. Monomer. It depends on Mg(2+) as a cofactor.

It localises to the cytoplasm. Its function is as follows. An essential GTPase which binds GTP, GDP and possibly (p)ppGpp with moderate affinity, with high nucleotide exchange rates and a fairly low GTP hydrolysis rate. Plays a role in control of the cell cycle, stress response, ribosome biogenesis and in those bacteria that undergo differentiation, in morphogenesis control. In Bartonella bacilliformis (strain ATCC 35685 / KC583 / Herrer 020/F12,63), this protein is GTPase Obg.